The sequence spans 80 residues: Moroidotoxin A (80 aa).

A signal peptide spans 1–27 (MAAVKKHLRFALVAAITIALLVAGSVA). Residues 28–44 (DESSEDIDNIVIKTPLD) constitute a propeptide that is removed on maturation. 3 cysteine pairs are disulfide-bonded: C48/C65, C53/C67, and C61/C76.

This sequence belongs to the gympietide family. Expressed in trichomes, that are stiff epidermal hairs located on the surface of petioles and leaves. Not expressed in other aerial parts.

Its subcellular location is the secreted. In terms of biological role, neurotoxin certainly responsible for the defensive, persistent, and painful stings of the giant stinging tree. Inhibits inactivation of Nav1.7/SCN9A sodium channel in sensory neurons by directly interacting with TMEM233, a newly described Nav-interacting protein. Has virtually no effect on Nav1.7/SCN9A function in heterologous expression systems and in neurons that do not express TMEM233. Also weakly but significantly affects Nav1.8/SCN10A. Coexpression of TMEM233 with Nav also confers ExTxA sensitivity to Nav1.1-Nav1.6. On the Nav1.7/SCN9A channel, causes a significant hyperpolarizing shift in the voltage dependence of activation. Its effects on Nav currents are irreversible, with no apparent reduction in activity even after repeated wash steps over 30 minutes. In vivo, induces nocifensive behavior in mice (licking or biting and shaking or lifting of the affected paw) lasting for approximately 1 hour. The chain is Moroidotoxin A from Dendrocnide moroides (Gympie stinging tree).